The primary structure comprises 201 residues: Prostamide/prostaglandin F synthase (201 aa).

It belongs to the peroxiredoxin-like PRXL2 family. Prostamide/prostaglandin F synthase subfamily.

Its subcellular location is the cytoplasm. It localises to the cytosol. The enzyme catalyses prostaglandin H2 + [thioredoxin]-dithiol = prostaglandin F2alpha + [thioredoxin]-disulfide. It catalyses the reaction prostamide F2alpha + [thioredoxin]-disulfide = prostamide H2 + [thioredoxin]-dithiol. Catalyzes the reduction of prostaglandin-ethanolamide H(2) (prostamide H(2)) to prostamide F(2alpha) with NADPH as proton donor. Also able to reduce prostaglandin H(2) to prostaglandin F(2alpha). The chain is Prostamide/prostaglandin F synthase (prxl2b) from Danio rerio (Zebrafish).